The primary structure comprises 447 residues: Aladin (447 aa).

The tract at residues 49-69 is disordered; it reads STPSSLQENEGQENGDKASGE. WD repeat units follow at residues 97-138, 142-181, 210-250, and 252-291; these read LSEI…EPCI, DSQR…NMAL, QNDE…GTPI, and RGLG…SEPW.

In terms of assembly, part of the nuclear pore complex (NPC). The NPC has an eight-fold symmetrical structure comprising a central transport channel and two rings, the cytoplasmic and nuclear rings, to which eight filaments are attached. The cytoplasmic filaments have loose ends, while the nuclear filaments are joined in a distal ring, forming a nuclear basket. NPCs are highly dynamic in configuration and composition, and can be devided in 3 subcomplexes, the NUP62 subcomplex, the NUP107-160 subcomplex and the NUP93 subcomplex, containing approximately 30 different nucleoporin proteins.

It localises to the nucleus envelope. Its subcellular location is the nucleus. It is found in the nuclear pore complex. In Arabidopsis thaliana (Mouse-ear cress), this protein is Aladin.